The primary structure comprises 835 residues: U-box domain-containing protein 35 (835 aa).

Disordered stretches follow at residues 1 to 22, 177 to 303, and 410 to 457; these read MSRS…SRTV, VRPS…SSNR, and EKEK…LEGT. Positions 10–19 are enriched in pro residues; it reads LPPPPPPPPS. The span at 195 to 218 shows a compositional bias: low complexity; that stretch reads RTNSSSGSSGPTSDSSDVMSSAHD. The segment covering 269-282 has biased composition (polar residues); sequence SSINRSSTDTTSRW. 2 stretches are compositionally biased toward basic and acidic residues: residues 285 to 295 and 410 to 455; these read RRRDYEERKEA and EKEK…EKLE. A coiled-coil region spans residues 340 to 459; the sequence is QSYTDNQVNL…EKEKLEGTLG (120 aa). Positions 480 to 745 constitute a Protein kinase domain; it reads FSEELKIGMG…DLKDQILPAL (266 aa). ATP is bound by residues 486–494 and Lys-507; that span reads IGMGAYGAV. Asp-602 (proton acceptor) is an active-site residue. The U-box domain occupies 765–835; sequence QPPTHFICPL…TAIMEWRSTR (71 aa).

The protein belongs to the protein kinase superfamily. Ser/Thr protein kinase family.

It carries out the reaction L-seryl-[protein] + ATP = O-phospho-L-seryl-[protein] + ADP + H(+). The catalysed reaction is L-threonyl-[protein] + ATP = O-phospho-L-threonyl-[protein] + ADP + H(+). It catalyses the reaction S-ubiquitinyl-[E2 ubiquitin-conjugating enzyme]-L-cysteine + [acceptor protein]-L-lysine = [E2 ubiquitin-conjugating enzyme]-L-cysteine + N(6)-ubiquitinyl-[acceptor protein]-L-lysine.. It functions in the pathway protein modification; protein ubiquitination. Its function is as follows. Functions as an E3 ubiquitin ligase. This Arabidopsis thaliana (Mouse-ear cress) protein is U-box domain-containing protein 35 (PUB35).